Reading from the N-terminus, the 370-residue chain is Phenylalanine dehydrogenase (370 aa).

Arg44 is an NAD(+) binding site. Lys68 is a binding site for L-phenylalanine. Lys80 acts as the Proton donor/acceptor in catalysis. 114 to 115 (TD) serves as a coordination point for L-phenylalanine. Residues Asp115, Ser146, Thr150, 180 to 186 (GLGKVGF), 203 to 204 (DV), 243 to 244 (AI), and 264 to 266 (AAN) each bind NAD(+). Asn266 is an L-phenylalanine binding site.

It belongs to the Glu/Leu/Phe/Val dehydrogenases family.

It carries out the reaction L-phenylalanine + NAD(+) + H2O = 3-phenylpyruvate + NH4(+) + NADH + H(+). It participates in amino-acid biosynthesis; L-phenylalanine biosynthesis; L-phenylalanine from phenylpyruvate (PDH route): step 1/1. Functionally, catalyzes the reversible NAD(+)-dependent oxidative deamination of L-phenylalanine to phenylpyruvate. The protein is Phenylalanine dehydrogenase of Caldalkalibacillus thermarum (strain TA2.A1).